Consider the following 89-residue polypeptide: Small ribosomal subunit protein uS15 (89 aa).

This sequence belongs to the universal ribosomal protein uS15 family. In terms of assembly, part of the 30S ribosomal subunit. Forms a bridge to the 50S subunit in the 70S ribosome, contacting the 23S rRNA.

One of the primary rRNA binding proteins, it binds directly to 16S rRNA where it helps nucleate assembly of the platform of the 30S subunit by binding and bridging several RNA helices of the 16S rRNA. In terms of biological role, forms an intersubunit bridge (bridge B4) with the 23S rRNA of the 50S subunit in the ribosome. This is Small ribosomal subunit protein uS15 from Buchnera aphidicola subsp. Cinara cedri (strain Cc).